The following is a 312-amino-acid chain: Retinol dehydrogenase 8 (312 aa).

Residue 9 to 18 (LISGCSSGIG) participates in NADP(+) binding. 3 helical membrane passes run 87–107 (VLVN…SLAA), 138–158 (IVVV…VYAA), and 170–190 (LAVQ…GPVV). Residue serine 143 coordinates substrate. Tyrosine 156 serves as the catalytic Proton acceptor.

It belongs to the short-chain dehydrogenases/reductases (SDR) family. As to expression, detected in photoreceptor outer segments in the retina (at protein level).

The protein resides in the membrane. It catalyses the reaction all-trans-retinol + NADP(+) = all-trans-retinal + NADPH + H(+). Its function is as follows. Retinol dehydrogenase with a clear preference for NADP. Converts all-trans-retinal to all-trans-retinol. May play a role in the regeneration of visual pigment at high light intensity. The sequence is that of Retinol dehydrogenase 8 (RDH8) from Bos taurus (Bovine).